Consider the following 340-residue polypeptide: NADH-quinone oxidoreductase subunit H (340 aa).

9 consecutive transmembrane segments (helical) span residues 9–29 (IWII…VAFI), 81–101 (LIAP…IPFA), 113–133 (LLFL…AGWA), 158–178 (GFAL…GIVL), 184–204 (LWHW…ITAV), 221–240 (IVAG…FFLA), 245–264 (MVLV…LSPF), 273–293 (LFAW…FIFT), and 316–336 (VLIP…EFHW).

The protein belongs to the complex I subunit 1 family. NDH-1 is composed of 14 different subunits. Subunits NuoA, H, J, K, L, M, N constitute the membrane sector of the complex.

The protein resides in the cell inner membrane. The catalysed reaction is a quinone + NADH + 5 H(+)(in) = a quinol + NAD(+) + 4 H(+)(out). Its function is as follows. NDH-1 shuttles electrons from NADH, via FMN and iron-sulfur (Fe-S) centers, to quinones in the respiratory chain. The immediate electron acceptor for the enzyme in this species is believed to be ubiquinone. Couples the redox reaction to proton translocation (for every two electrons transferred, four hydrogen ions are translocated across the cytoplasmic membrane), and thus conserves the redox energy in a proton gradient. This subunit may bind ubiquinone. This is NADH-quinone oxidoreductase subunit H from Coxiella burnetii (strain CbuK_Q154) (Coxiella burnetii (strain Q154)).